The primary structure comprises 363 residues: Flagellar P-ring protein (363 aa).

The first 20 residues, 1-20, serve as a signal peptide directing secretion; that stretch reads MKKFTLLLLCFVLPMTSAYA.

Belongs to the FlgI family. In terms of assembly, the basal body constitutes a major portion of the flagellar organelle and consists of four rings (L,P,S, and M) mounted on a central rod.

It localises to the periplasm. The protein localises to the bacterial flagellum basal body. Functionally, assembles around the rod to form the L-ring and probably protects the motor/basal body from shearing forces during rotation. The polypeptide is Flagellar P-ring protein (Vibrio vulnificus (strain YJ016)).